The following is a 179-amino-acid chain: Large ribosomal subunit protein uL5 (179 aa).

It belongs to the universal ribosomal protein uL5 family. As to quaternary structure, part of the 50S ribosomal subunit; part of the 5S rRNA/L5/L18/L25 subcomplex. Contacts the 5S rRNA and the P site tRNA. Forms a bridge to the 30S subunit in the 70S ribosome.

In terms of biological role, this is one of the proteins that bind and probably mediate the attachment of the 5S RNA into the large ribosomal subunit, where it forms part of the central protuberance. In the 70S ribosome it contacts protein S13 of the 30S subunit (bridge B1b), connecting the 2 subunits; this bridge is implicated in subunit movement. Contacts the P site tRNA; the 5S rRNA and some of its associated proteins might help stabilize positioning of ribosome-bound tRNAs. The sequence is that of Large ribosomal subunit protein uL5 from Geobacillus sp. (strain WCH70).